The primary structure comprises 507 residues: Maturase K (507 aa).

Belongs to the intron maturase 2 family. MatK subfamily.

It localises to the plastid. Its subcellular location is the chloroplast. Functionally, usually encoded in the trnK tRNA gene intron. Probably assists in splicing its own and other chloroplast group II introns. The sequence is that of Maturase K from Buxus microphylla (Littleleaf boxwood).